Consider the following 447-residue polypeptide: Tubulin beta-5 chain (447 aa).

Glutamine 11, glutamate 69, serine 138, glycine 142, threonine 143, glycine 144, asparagine 204, and asparagine 226 together coordinate GTP. Residue glutamate 69 coordinates Mg(2+). The segment at 424-447 (QYQDATAEEEGEFDEDEELDDAMG) is disordered. Over residues 429 to 447 (TAEEEGEFDEDEELDDAMG) the composition is skewed to acidic residues.

This sequence belongs to the tubulin family. In terms of assembly, dimer of alpha and beta chains. A typical microtubule is a hollow water-filled tube with an outer diameter of 25 nm and an inner diameter of 15 nM. Alpha-beta heterodimers associate head-to-tail to form protofilaments running lengthwise along the microtubule wall with the beta-tubulin subunit facing the microtubule plus end conferring a structural polarity. Microtubules usually have 13 protofilaments but different protofilament numbers can be found in some organisms and specialized cells. It depends on Mg(2+) as a cofactor.

Its subcellular location is the cytoplasm. It is found in the cytoskeleton. In terms of biological role, tubulin is the major constituent of microtubules, a cylinder consisting of laterally associated linear protofilaments composed of alpha- and beta-tubulin heterodimers. Microtubules grow by the addition of GTP-tubulin dimers to the microtubule end, where a stabilizing cap forms. Below the cap, tubulin dimers are in GDP-bound state, owing to GTPase activity of alpha-tubulin. This Ectocarpus variabilis (Brown alga) protein is Tubulin beta-5 chain (TUBB5).